The following is a 473-amino-acid chain: Phenolic acid decarboxylase (473 aa).

The Mn(2+) site is built by Asn-160, His-182, and Glu-224. Residues 160–165 (NVGIYR) and 181–182 (QH) each bind prenylated FMN. Catalysis depends on Glu-273, which acts as the Proton donor.

It belongs to the UbiD family. YclC subfamily. The cofactor is prenylated FMN. Mn(2+) is required as a cofactor.

It carries out the reaction 4-hydroxybenzoate + H(+) = phenol + CO2. The catalysed reaction is vanillate + H(+) = guaiacol + CO2. Involved in the non-oxidative decarboxylation and detoxification of phenolic derivatives under both aerobic and anaerobic conditions. Phenolic acid decarboxylase that catalyzes the reversible decarboxylation of 4-hydroxybenzoate and vanillate. Could also catalyze the decarboxylation of salicylate. Is not active on di- and tri-hydroxybenzoate derivatives. The protein is Phenolic acid decarboxylase of Bacillus subtilis (strain 168).